Here is a 463-residue protein sequence, read N- to C-terminus: Dipeptidyl peptidase 1 (463 aa).

An N-terminal signal peptide occupies residues methionine 1–cysteine 24. Residues asparagine 29, asparagine 53, and asparagine 119 are each glycosylated (N-linked (GlcNAc...) asparagine). Disulfide bonds link cysteine 30–cysteine 118, cysteine 54–cysteine 136, cysteine 255–cysteine 298, cysteine 291–cysteine 331, and cysteine 321–cysteine 337. Positions alanine 135 to histidine 230 are excised as a propeptide. Cysteine 258 is an active-site residue. The N-linked (GlcNAc...) asparagine glycan is linked to asparagine 276. Residues phenylalanine 302 and tyrosine 304 each contribute to the chloride site. Tyrosine 347 is a binding site for chloride. Residues histidine 405 and asparagine 427 contribute to the active site.

This sequence belongs to the peptidase C1 family. In terms of assembly, tetramer of heterotrimers consisting of exclusion domain, heavy- and light chains. Chloride serves as cofactor.

The protein localises to the lysosome. The catalysed reaction is Release of an N-terminal dipeptide, Xaa-Yaa-|-Zaa-, except when Xaa is Arg or Lys, or Yaa or Zaa is Pro.. Thiol protease. Has dipeptidylpeptidase activity. Active against a broad range of dipeptide substrates composed of both polar and hydrophobic amino acids. Proline cannot occupy the P1 position and arginine cannot occupy the P2 position of the substrate. Can act as both an exopeptidase and endopeptidase. Activates serine proteases such as elastase, cathepsin G and granzymes A and B. The protein is Dipeptidyl peptidase 1 (CTSC) of Macaca fascicularis (Crab-eating macaque).